The following is a 370-amino-acid chain: Alpha-ketoglutarate-dependent xanthine dioxygenase xanA (370 aa).

A substrate-binding site is contributed by H107. Positions 149 and 151 each coordinate Fe cation. 2-oxoglutarate is bound by residues T195 and W325. H340 is a Fe cation binding site. R352 serves as a coordination point for 2-oxoglutarate.

This sequence belongs to the TfdA dioxygenase family. It depends on Fe(2+) as a cofactor. Post-translationally, glycosylated. Is subject to both N- and O-linked glycosylation. Phosphorylated.

The protein resides in the cytoplasm. Its subcellular location is the cytosol. The enzyme catalyses xanthine + 2-oxoglutarate + O2 = urate + succinate + CO2. Cu(2+) and Zn(2+) completely inhibit the xanthine dioxygenase activity, whereas Co(2+), Mn(2+), and Ni(2+) partially inhibit the activity. The inactive metal ions are presumed to compete for the Fe(2+)-binding site. N-oxalylglycine (NOG), a known inhibitor of several Fe(2+)/alpha-ketoglutarate-dependent dioxygenase family members, competes with alpha-ketoglutarate and provides a Ki of 0.12 uM for inhibition. 6,8-dihydroxypurine acts as a slow-binding competitive inhibitor. The thiol-specific inhibitors 5,5'-dithiobis(2-nitrobenzoic acid) (DTNB) and iodoacetamide, inhibit also the catalytic activity. Functionally, alpha-ketoglutarate-dependent xanthine dioxygenase is a non-heme mononuclear Fe(2+) enzyme that decarboxylates alpha-ketoglutarate to succinate and CO(2) while hydroxylating xanthine to generate uric acid. Allows xanthine utilization as a nitrogen source. Whereas xanA is highly specific for xanthine, alpha-ketoadipic acid can replace alpha-ketoglutarate as a cosubstrate. Exhibits ferroxidase activity in the absence of substrates. The protein is Alpha-ketoglutarate-dependent xanthine dioxygenase xanA of Emericella nidulans (Aspergillus nidulans).